Here is a 507-residue protein sequence, read N- to C-terminus: Cobyric acid synthase (507 aa).

The 198-residue stretch at 259–456 (EIQIAVIKLP…LHGIFDNGTW (198 aa)) folds into the GATase cobBQ-type domain. Cysteine 340 functions as the Nucleophile in the catalytic mechanism. The active site involves histidine 448.

It belongs to the CobB/CobQ family. CobQ subfamily.

It participates in cofactor biosynthesis; adenosylcobalamin biosynthesis. Catalyzes amidations at positions B, D, E, and G on adenosylcobyrinic A,C-diamide. NH(2) groups are provided by glutamine, and one molecule of ATP is hydrogenolyzed for each amidation. This is Cobyric acid synthase from Prochlorococcus marinus (strain SARG / CCMP1375 / SS120).